Here is a 246-residue protein sequence, read N- to C-terminus: Anionic trypsin-2 (246 aa).

A signal peptide spans 1–15 (MSALLILALVGAAVA). The propeptide at 16–23 (FPVDDDDK) is activation peptide. The 221-residue stretch at 24–244 (IVGGYTCRES…YVDWIQNTIA (221 aa)) folds into the Peptidase S1 domain. 6 disulfide bridges follow: Cys-30-Cys-160, Cys-48-Cys-64, Cys-132-Cys-233, Cys-139-Cys-206, Cys-171-Cys-185, and Cys-196-Cys-220. His-63 (charge relay system) is an active-site residue. Ca(2+) is bound by residues Glu-75, Asn-77, Val-80, and Glu-85. The active-site Charge relay system is the Asp-107. Ser-200 acts as the Charge relay system in catalysis.

The protein belongs to the peptidase S1 family. The cofactor is Ca(2+). As to expression, expressed in the pancreas, lung and kidney.

It localises to the secreted. The protein localises to the extracellular space. The catalysed reaction is Preferential cleavage: Arg-|-Xaa, Lys-|-Xaa.. This Mus musculus (Mouse) protein is Anionic trypsin-2 (Prss2).